A 413-amino-acid polypeptide reads, in one-letter code: Glucose-1-phosphate adenylyltransferase (413 aa).

Alpha-D-glucose 1-phosphate-binding positions include tyrosine 102, glycine 167, 182–183, and serine 200; that span reads EK.

This sequence belongs to the bacterial/plant glucose-1-phosphate adenylyltransferase family. In terms of assembly, homotetramer.

The catalysed reaction is alpha-D-glucose 1-phosphate + ATP + H(+) = ADP-alpha-D-glucose + diphosphate. It functions in the pathway glycan biosynthesis; glycogen biosynthesis. Involved in the biosynthesis of ADP-glucose, a building block required for the elongation reactions to produce glycogen. Catalyzes the reaction between ATP and alpha-D-glucose 1-phosphate (G1P) to produce pyrophosphate and ADP-Glc. The sequence is that of Glucose-1-phosphate adenylyltransferase from Deinococcus geothermalis (strain DSM 11300 / CIP 105573 / AG-3a).